The sequence spans 531 residues: MLMSTTPYFGEVSKRRTFAIISHPDAGKTTITEKVLLFGRAIQVAGTVKGRGSNQHAKSDWMEMEKERGISVTTSVMQFPYGDCLVNLLDTPGHEDFSEDTYRTLTAVDSCLMVIDAAKGVEDRTRKLMEVTRLRDTPIVTFMNKLDREIRDPMELMDEVENELKIACSPITWPIGCGKEFKGVYHIHRDETILYTSGQGHTIQEERIIKGLDNPELDQAVGADLAAQLREELELVLGASHEFDRELFLQGELTPVFFGTALGNFGVDHMLDGLTQWAPSPMPRQAAERVVEASEEKFTGFVFKIQANMDPKHRDRIAFVRIVSGTYKQGMKMNHVRLGKQVNISDAVTFMAGDRARAEEAFAGDIIGLHNHGTIQIGDTFTQGETLKFTGIPNFAPELFRRIRLRDPLKQKQLLKGLVQLSEEGAVQVFRPLQNNDLIVGAVGVLQFDVVVSRLKSEYNVEAIYEGVNVATARWVECDDVKKFEEFKRKNQSNLALDGGDNLAYIAPTMVNLNLAQERSPEVKFRATREH.

In terms of domain architecture, tr-type G spans 13-282 (SKRRTFAIIS…GLTQWAPSPM (270 aa)). GTP is bound by residues 22–29 (SHPDAGKT), 90–94 (DTPGH), and 144–147 (NKLD).

This sequence belongs to the TRAFAC class translation factor GTPase superfamily. Classic translation factor GTPase family. PrfC subfamily.

The protein localises to the cytoplasm. In terms of biological role, increases the formation of ribosomal termination complexes and stimulates activities of RF-1 and RF-2. It binds guanine nucleotides and has strong preference for UGA stop codons. It may interact directly with the ribosome. The stimulation of RF-1 and RF-2 is significantly reduced by GTP and GDP, but not by GMP. This chain is Peptide chain release factor 3, found in Vibrio cholerae serotype O1 (strain ATCC 39315 / El Tor Inaba N16961).